Consider the following 223-residue polypeptide: Ribonuclease 3 (223 aa).

The 124-residue stretch at 4–127 folds into the RNase III domain; that stretch reads LENLQKLLGY…VMGAVYLEAG (124 aa). Residue Glu-40 participates in Mg(2+) binding. The active site involves Asp-44. Asp-113 and Glu-116 together coordinate Mg(2+). Residue Glu-116 is part of the active site. The region spanning 154–223 is the DRBM domain; sequence DYKTALQEIT…AKIALEKMKK (70 aa).

This sequence belongs to the ribonuclease III family. In terms of assembly, homodimer. Mg(2+) is required as a cofactor.

It is found in the cytoplasm. The enzyme catalyses Endonucleolytic cleavage to 5'-phosphomonoester.. Its function is as follows. Digests double-stranded RNA. Involved in the processing of primary rRNA transcript to yield the immediate precursors to the large and small rRNAs (23S and 16S). Processes some mRNAs, and tRNAs when they are encoded in the rRNA operon. Processes pre-crRNA and tracrRNA of type II CRISPR loci if present in the organism. The sequence is that of Ribonuclease 3 from Campylobacter curvus (strain 525.92).